Reading from the N-terminus, the 418-residue chain is Protein-lysine N-trimethyltransferase SMYD5 (418 aa).

The SET domain occupies 21–352 (VSVEVRFVSS…PGEEICISYL (332 aa)). The segment at 98–136 (PELCTVRKDLHQNCPHCQVMYCSAECRLAATEQYHQVLC) adopts an MYND-type zinc-finger fold. An S-adenosyl-L-methionine-binding site is contributed by tyrosine 351. The interval 385 to 418 (ADEPNVTSEEEEEEEEEEEGEPEDAELGDEMTDV) is disordered.

It belongs to the class V-like SAM-binding methyltransferase superfamily. In terms of assembly, interacts with the N-CoR complex. Interacts with EHMT2 and CBX5. Post-translationally, ubiquitinated and degradaed by the proteasome in response to mild hypothermia (32 degrees Celsius), relieving repression of the SP1 gene.

The protein resides in the cytoplasm. The enzyme catalyses L-lysyl-[protein] + 3 S-adenosyl-L-methionine = N(6),N(6),N(6)-trimethyl-L-lysyl-[protein] + 3 S-adenosyl-L-homocysteine + 3 H(+). It carries out the reaction L-lysyl(20)-[histone H4] + 3 S-adenosyl-L-methionine = N(6),N(6),N(6)-trimethyl-L-lysyl(20)-[histone H4] + 3 S-adenosyl-L-homocysteine + 3 H(+). It catalyses the reaction L-lysyl(36)-[histone H3] + 3 S-adenosyl-L-methionine = N(6),N(6),N(6)-trimethyl-L-lysyl(36)-[histone H3] + 3 S-adenosyl-L-homocysteine + 3 H(+). Protein-lysine N-trimethyltransferase that specifically catalyzes trimethylation of 'Lys-22' of the RPL40/eL40 subunit of the 60S ribosome, thereby promoting translation elongation and protein synthesis. May also act as a histone methyltransferase in the context of histone octamers, but not on nucleosome substrates: trimethylates 'Lys-36' of histone H3 and 'Lys-20' of histone H4 to form H3K36me3 and H4K20me3, respectively. The histone methyltransferase activity, which is independent of its SET domain, is however unsure in vivo. In association with the NCoR corepressor complex, involved in the repression of toll-like receptor 4 (TLR4)-target inflammatory genes in macrophages, possibly by catalyzing the formation of H4K20me3 at the gene promoters. Plays an important role in embryonic stem (ES) cell self-renewal and differentiation. Maintains genome stability of ES cells during differentiation through regulation of heterochromatin formation and repression of endogenous repetitive DNA elements by promoting H4K20me3 marks. Acts as a regulator of the hypothermia response: its degradation in response to mild hypothermia relieves the formation of H3K36me3 at gene promoters, allowing expression of the neuroprotective gene SP1. The protein is Protein-lysine N-trimethyltransferase SMYD5 of Homo sapiens (Human).